The following is an 80-amino-acid chain: Large ribosomal subunit protein eL14 (80 aa).

The protein belongs to the eukaryotic ribosomal protein eL14 family.

This is Large ribosomal subunit protein eL14 from Methanocaldococcus jannaschii (strain ATCC 43067 / DSM 2661 / JAL-1 / JCM 10045 / NBRC 100440) (Methanococcus jannaschii).